The sequence spans 264 residues: tRNA (guanine-N(1)-)-methyltransferase (264 aa).

Residues glycine 125 and 145–150 (LGDFVL) contribute to the S-adenosyl-L-methionine site.

This sequence belongs to the RNA methyltransferase TrmD family. In terms of assembly, homodimer.

The protein localises to the cytoplasm. It catalyses the reaction guanosine(37) in tRNA + S-adenosyl-L-methionine = N(1)-methylguanosine(37) in tRNA + S-adenosyl-L-homocysteine + H(+). Its function is as follows. Specifically methylates guanosine-37 in various tRNAs. In Burkholderia cenocepacia (strain HI2424), this protein is tRNA (guanine-N(1)-)-methyltransferase.